Here is a 370-residue protein sequence, read N- to C-terminus: Platelet-derived growth factor D (370 aa).

A signal peptide spans 1–23 (MQRLVLVSILLCANFSCYPDTFA). The region spanning 52-170 (REENIQVTSN…PGFKIYYSFV (119 aa)) is the CUB domain. Cys-109 and Cys-131 are joined by a disulfide. A glycan (N-linked (GlcNAc...) asparagine) is linked at Asn-276. 2 cysteine pairs are disulfide-bonded: Cys-302-Cys-360 and Cys-306-Cys-362.

The protein belongs to the PDGF/VEGF growth factor family. As to quaternary structure, homodimer; disulfide-linked. Interacts with PDGFRB homodimers, and with heterodimers formed by PDGFRA and PDGFRB. In terms of processing, activated by proteolytic cleavage. Proteolytic removal of the N-terminal CUB domain releasing the core domain is necessary for unmasking the receptor-binding epitopes of the core domain. Cleavage after Arg-247 or Arg-249 by urokinase plasminogen activator gives rise to the active form. Expressed at high levels in developing heart, lung, kidney and some muscle derivatives. Moderately expressed in liver, brain and testis. In the kidney, localized to glomerular mesangial cells and vascular smooth muscle cells. Up-regulated in areas of renal fibrosis. In mice with unilateral ureteral obstruction, expressed in interstitial cells at day 4, with an increased to maximal expression at day 14.

It localises to the secreted. Its function is as follows. Growth factor that plays an essential role in the regulation of embryonic development, cell proliferation, cell migration, survival and chemotaxis. Potent mitogen for cells of mesenchymal origin. Plays an important role in wound healing. Has oncogenic potential and can induce tumor formation. Induces macrophage recruitment, increased interstitial pressure, and blood vessel maturation during angiogenesis. Can initiate events that lead to a mesangial proliferative glomerulonephritis, including influx of monocytes and macrophages and production of extracellular matrix. This is Platelet-derived growth factor D (Pdgfd) from Mus musculus (Mouse).